We begin with the raw amino-acid sequence, 113 residues long: Large ribosomal subunit protein uL24 (113 aa).

This sequence belongs to the universal ribosomal protein uL24 family. Part of the 50S ribosomal subunit.

In terms of biological role, one of two assembly initiator proteins, it binds directly to the 5'-end of the 23S rRNA, where it nucleates assembly of the 50S subunit. One of the proteins that surrounds the polypeptide exit tunnel on the outside of the subunit. This Synechococcus sp. (strain RCC307) protein is Large ribosomal subunit protein uL24.